Reading from the N-terminus, the 179-residue chain is MNQPNSLYLALLIEAKWQNPEDFHFSSDFAKHWLLEQGSLSRRLARHCQHLTVELMRNEKSGVGQLTMQETQGLSPEICLIREVVLSGDQTPWVLGRTLIPETTLADQPYDLATLGDIPLGLTVFSAEQVERDALQVAWIETPQGRLLARRSRLWMNHKPMLVAELFLPDAPIYSRESV.

Substrate is bound by residues arginine 82, leucine 120, and glutamate 165.

This sequence belongs to the UbiC family.

The protein localises to the cytoplasm. It carries out the reaction chorismate = 4-hydroxybenzoate + pyruvate. It functions in the pathway cofactor biosynthesis; ubiquinone biosynthesis. Its function is as follows. Removes the pyruvyl group from chorismate, with concomitant aromatization of the ring, to provide 4-hydroxybenzoate (4HB) for the ubiquinone pathway. This is Probable chorismate pyruvate-lyase from Vibrio vulnificus (strain YJ016).